The sequence spans 407 residues: D-inositol 3-phosphate glycosyltransferase (407 aa).

Residue His2 participates in 1D-myo-inositol 3-phosphate binding. Residues 8–9 (QP) and Gly16 each bind UDP-N-acetyl-alpha-D-glucosamine. Residues 13-18 (DAGGLN), Arg71, Tyr104, Thr128, and Arg148 each bind 1D-myo-inositol 3-phosphate. 2 residues coordinate UDP-N-acetyl-alpha-D-glucosamine: Arg222 and Lys227. The Mg(2+) site is built by Tyr297, Arg298, and Ala300. Residues Glu310 and Glu318 each coordinate UDP-N-acetyl-alpha-D-glucosamine. Thr324 serves as a coordination point for Mg(2+).

This sequence belongs to the glycosyltransferase group 1 family. MshA subfamily. As to quaternary structure, homodimer.

It catalyses the reaction 1D-myo-inositol 3-phosphate + UDP-N-acetyl-alpha-D-glucosamine = 1D-myo-inositol 2-acetamido-2-deoxy-alpha-D-glucopyranoside 3-phosphate + UDP + H(+). Its function is as follows. Catalyzes the transfer of a N-acetyl-glucosamine moiety to 1D-myo-inositol 3-phosphate to produce 1D-myo-inositol 2-acetamido-2-deoxy-glucopyranoside 3-phosphate in the mycothiol biosynthesis pathway. This is D-inositol 3-phosphate glycosyltransferase from Frankia alni (strain DSM 45986 / CECT 9034 / ACN14a).